Consider the following 407-residue polypeptide: MTNQTVRGTKDLLFDEWYKFKHIEQTASRISSLYGFLPVQTPIFEYTEVFTKTLGDSSDIITKEMYTFIDKGGKSITLRPEFTAAIVRLLIEKKLQAPIKLFSIGPAFRYERPQKGRQRQFHQINFEVFGIEDPKADIELISLAQHLLTEFGINKNVKLEINSLGDSETITQYREALISYLKKFQNDLSEDSQNRLIKNPLRILDSKDKTDKEIISDAPKISDYYTKESSYFFDQVLNGLQALGIPYTVNSKLVRGLDYYCHTVFEFVTEDLGAQGAVFAGGRYDNLVSSVGGKHTPAIGFAGGIERIMELINYAEKKERPIYIIPIGGEAEEHALTLASELRRNGLYVIYEYSGTLKTRMKKANQANAKVVLIFGDEELSSKTLKIKNMDTGEEKMIARDKTVENI.

It belongs to the class-II aminoacyl-tRNA synthetase family. Homodimer.

The protein localises to the cytoplasm. The catalysed reaction is tRNA(His) + L-histidine + ATP = L-histidyl-tRNA(His) + AMP + diphosphate + H(+). The chain is Histidine--tRNA ligase from Wolbachia pipientis subsp. Culex pipiens (strain wPip).